Reading from the N-terminus, the 556-residue chain is Olefin beta-lactone synthetase (556 aa).

Residues Thr-187–Lys-195, Thr-321–Thr-326, Asp-430, and Arg-445 each bind ATP.

Belongs to the ATP-dependent AMP-binding enzyme family. Monomer. Forms a complex with OleB and OleD.

It is found in the cytoplasm. It carries out the reaction a (2R,3S)-2-alkyl-3-hydroxyalkanoate + ATP = a cis-3-alkyl-4-alkyloxetan-2-one + AMP + diphosphate. Its function is as follows. Involved in olefin biosynthesis. Catalyzes the conversion of 2-alkyl-3-hydroxyalkanoic acids to beta-lactones in the presence of ATP. The polypeptide is Olefin beta-lactone synthetase (Xanthomonas campestris pv. campestris (strain ATCC 33913 / DSM 3586 / NCPPB 528 / LMG 568 / P 25)).